The primary structure comprises 149 residues: Cytochrome c-type biogenesis protein CcmE (149 aa).

Topologically, residues 1–7 (MTRKQKR) are cytoplasmic. Residues 8-28 (LAVIAGGVGFIMVAVLLVLFA) form a helical; Signal-anchor for type II membrane protein membrane-spanning segment. At 29–149 (FGQSIAYFYM…GVWKGEGEAK (121 aa)) the chain is on the periplasmic side. Heme is bound by residues His123 and Tyr127.

This sequence belongs to the CcmE/CycJ family.

It localises to the cell inner membrane. Heme chaperone required for the biogenesis of c-type cytochromes. Transiently binds heme delivered by CcmC and transfers the heme to apo-cytochromes in a process facilitated by CcmF and CcmH. In Allorhizobium ampelinum (strain ATCC BAA-846 / DSM 112012 / S4) (Agrobacterium vitis (strain S4)), this protein is Cytochrome c-type biogenesis protein CcmE.